A 144-amino-acid chain; its full sequence is Transcription antitermination protein NusB (144 aa).

Belongs to the NusB family.

Involved in transcription antitermination. Required for transcription of ribosomal RNA (rRNA) genes. Binds specifically to the boxA antiterminator sequence of the ribosomal RNA (rrn) operons. This is Transcription antitermination protein NusB from Haemophilus influenzae (strain PittEE).